A 151-amino-acid chain; its full sequence is Ribosome maturation factor RimP (151 aa).

The protein belongs to the RimP family.

It is found in the cytoplasm. Its function is as follows. Required for maturation of 30S ribosomal subunits. The sequence is that of Ribosome maturation factor RimP from Shewanella piezotolerans (strain WP3 / JCM 13877).